We begin with the raw amino-acid sequence, 176 residues long: Urease accessory protein UreE (176 aa).

Residues phenylalanine 134 to glutamine 176 are disordered. Basic and acidic residues predominate over residues histidine 161–glutamine 176.

The protein belongs to the UreE family.

It is found in the cytoplasm. Functionally, involved in urease metallocenter assembly. Binds nickel. Probably functions as a nickel donor during metallocenter assembly. The sequence is that of Urease accessory protein UreE from Ruegeria sp. (strain TM1040) (Silicibacter sp.).